The sequence spans 347 residues: NADH-quinone oxidoreductase subunit H (347 aa).

Transmembrane regions (helical) follow at residues 13–33 (LIIA…VAYL), 50–70 (PNVV…KFVF), 82–102 (GVFL…WAVI), 115–135 (VGIL…IMGG), 161–181 (IGFV…TDIV), 198–218 (FLDW…ISAL), 248–268 (FLLF…LMTV), 286–306 (VPGI…FAMV), and 325–345 (VFLP…KVFG).

This sequence belongs to the complex I subunit 1 family. As to quaternary structure, NDH-1 is composed of 14 different subunits. Subunits NuoA, H, J, K, L, M, N constitute the membrane sector of the complex.

Its subcellular location is the cell inner membrane. The enzyme catalyses a quinone + NADH + 5 H(+)(in) = a quinol + NAD(+) + 4 H(+)(out). Functionally, NDH-1 shuttles electrons from NADH, via FMN and iron-sulfur (Fe-S) centers, to quinones in the respiratory chain. The immediate electron acceptor for the enzyme in this species is believed to be ubiquinone. Couples the redox reaction to proton translocation (for every two electrons transferred, four hydrogen ions are translocated across the cytoplasmic membrane), and thus conserves the redox energy in a proton gradient. This subunit may bind ubiquinone. The polypeptide is NADH-quinone oxidoreductase subunit H (Brucella ovis (strain ATCC 25840 / 63/290 / NCTC 10512)).